Reading from the N-terminus, the 322-residue chain is GTP 3',8-cyclase (322 aa).

The region spanning 5-233 (KYGRVVDYLR…NAPASIYRLD (229 aa)) is the Radical SAM core domain. Residue Arg14 participates in GTP binding. [4Fe-4S] cluster is bound by residues Cys21 and Cys25. Position 27 (Tyr27) interacts with S-adenosyl-L-methionine. A [4Fe-4S] cluster-binding site is contributed by Cys28. Position 64 (Arg64) interacts with GTP. Residue Gly68 coordinates S-adenosyl-L-methionine. Thr95 contributes to the GTP binding site. Position 119 (Ser119) interacts with S-adenosyl-L-methionine. Lys155 serves as a coordination point for GTP. Met189 is a binding site for S-adenosyl-L-methionine. [4Fe-4S] cluster-binding residues include Cys249 and Cys252. GTP is bound at residue 254–256 (RIR). Cys266 is a [4Fe-4S] cluster binding site.

It belongs to the radical SAM superfamily. MoaA family. As to quaternary structure, monomer and homodimer. The cofactor is [4Fe-4S] cluster.

The enzyme catalyses GTP + AH2 + S-adenosyl-L-methionine = (8S)-3',8-cyclo-7,8-dihydroguanosine 5'-triphosphate + 5'-deoxyadenosine + L-methionine + A + H(+). The protein operates within cofactor biosynthesis; molybdopterin biosynthesis. In terms of biological role, catalyzes the cyclization of GTP to (8S)-3',8-cyclo-7,8-dihydroguanosine 5'-triphosphate. The chain is GTP 3',8-cyclase from Campylobacter curvus (strain 525.92).